Here is a 302-residue protein sequence, read N- to C-terminus: 4-hydroxy-tetrahydrodipicolinate synthase (302 aa).

Threonine 55 contributes to the pyruvate binding site. The Proton donor/acceptor role is filled by tyrosine 144. The Schiff-base intermediate with substrate role is filled by lysine 172. Valine 214 serves as a coordination point for pyruvate.

This sequence belongs to the DapA family. As to quaternary structure, homotetramer; dimer of dimers.

The protein resides in the cytoplasm. The catalysed reaction is L-aspartate 4-semialdehyde + pyruvate = (2S,4S)-4-hydroxy-2,3,4,5-tetrahydrodipicolinate + H2O + H(+). It functions in the pathway amino-acid biosynthesis; L-lysine biosynthesis via DAP pathway; (S)-tetrahydrodipicolinate from L-aspartate: step 3/4. Its function is as follows. Catalyzes the condensation of (S)-aspartate-beta-semialdehyde [(S)-ASA] and pyruvate to 4-hydroxy-tetrahydrodipicolinate (HTPA). In Prochlorococcus marinus (strain MIT 9313), this protein is 4-hydroxy-tetrahydrodipicolinate synthase.